The sequence spans 457 residues: MFEEPEWVEAAPAIVGLGAATAQVRPATAPPVKGRKRRHLLATLRALEAASLSQQTPSLPGSDSEEEEEVGRKKRHLQRPSLASVSKEVGKKRKGKCQKQAPSISDSEGKEIRRKCHRQAPPLGGVSAGEEKGKRKCQEYSSLHLTQPLDSVDQTVHNSRTSTATIDPSKPSPESMSPNSSHTLSRKQWRNRQKNKRRHKNKFRPLQTPEQAPPKASIEETEVPPVPKSDSQESRAGALRARMTQRLDGARFRYLNEQLYSGPSSAARRLFQEDPEAFLLYHRGFQRQVKKWPLHPVDRIAKDLRQKPASLVVADFGCGDCRLASSVRNPVHCFDLASLDPRVTVCDMAQVPLEDESVDVAVFCLSLMGTNIRDFLEEANRVLKTGGLLKVAEVSSRFEDIRTFLGAVTKLGFKIIYKDLTNSHFFLFDFEKTGPPRVGPKAQLSGLKLQPCLYKRR.

Residues 47–237 (LEAASLSQQT…KSDSQESRAG (191 aa)) form a disordered region. Polar residues predominate over residues 51–61 (SLSQQTPSLPG). 3 positions are modified to phosphoserine: serine 62, serine 64, and serine 105. Residues 129–138 (GEEKGKRKCQ) are compositionally biased toward basic and acidic residues. The segment covering 139 to 183 (EYSSLHLTQPLDSVDQTVHNSRTSTATIDPSKPSPESMSPNSSHT) has biased composition (polar residues). Residues serine 172 and serine 177 each carry the phosphoserine modification. Positions 184 to 203 (LSRKQWRNRQKNKRRHKNKF) are enriched in basic residues. S-adenosyl-L-methionine-binding residues include histidine 282, glycine 317, aspartate 335, aspartate 347, methionine 348, and cysteine 364.

Belongs to the methyltransferase superfamily. RRP8 family. As to quaternary structure, component of the eNoSC complex, composed of SIRT1, SUV39H1 and RRP8.

The protein resides in the nucleus. It localises to the nucleolus. Essential component of the eNoSC (energy-dependent nucleolar silencing) complex, a complex that mediates silencing of rDNA in response to intracellular energy status and acts by recruiting histone-modifying enzymes. The eNoSC complex is able to sense the energy status of cell: upon glucose starvation, elevation of NAD(+)/NADP(+) ratio activates SIRT1, leading to histone H3 deacetylation followed by dimethylation of H3 at 'Lys-9' (H3K9me2) by SUV39H1 and the formation of silent chromatin in the rDNA locus. In the complex, RRP8 binds to H3K9me2 and probably acts as a methyltransferase. Its substrates are however unknown. The polypeptide is Ribosomal RNA-processing protein 8 (Rrp8) (Mus musculus (Mouse)).